Consider the following 282-residue polypeptide: E3 ubiquitin-protein ligase RNF217 (282 aa).

Residues 1–218 (MSCRVCLEDR…LSIFGCKYRY (218 aa)) form a TRIAD supradomain region. Residues cysteine 3, cysteine 6, cysteine 23, cysteine 26, cysteine 123, cysteine 126, histidine 131, cysteine 136, cysteine 163, and cysteine 166 each contribute to the Zn(2+) site. Residues 3–49 (CRVCLEDRSIKPLPCCKKPVCDECLKRYLSSQVQLGQAEIQCPITEC) form an RING-type 1 zinc finger. An IBR-type zinc finger spans residues 68–136 (IKYKYFLELS…HAPWHEGVNC (69 aa)). The RING-type 2; atypical zinc finger occupies 163 to 192 (CPRCKVHIQRTEGCDHMTCSQCNTNFCYRC). Cysteine 176 is a catalytic residue. Residues cysteine 181, cysteine 184, cysteine 189, cysteine 192, histidine 205, and cysteine 214 each contribute to the Zn(2+) site. Residues 243-263 (LLIVLGLVLGALAVVIGLFGL) form a helical membrane-spanning segment.

The protein belongs to the RBR family. RNF217 subfamily.

It localises to the cytoplasm. The protein localises to the membrane. It catalyses the reaction [E2 ubiquitin-conjugating enzyme]-S-ubiquitinyl-L-cysteine + [acceptor protein]-L-lysine = [E2 ubiquitin-conjugating enzyme]-L-cysteine + [acceptor protein]-N(6)-ubiquitinyl-L-lysine.. It functions in the pathway protein modification; protein ubiquitination. Functionally, E3 ubiquitin-protein ligase which accepts ubiquitin from E2 ubiquitin-conjugating enzymes in the form of a thioester and then directly transfers the ubiquitin to targeted substrates. Mediates the degradation of the iron exporter ferroportin/SLC40A1 and thus regulates iron homeostasis. This is E3 ubiquitin-protein ligase RNF217 (rnf217) from Xenopus laevis (African clawed frog).